The primary structure comprises 131 residues: ATP synthase epsilon chain, chloroplastic (131 aa).

This sequence belongs to the ATPase epsilon chain family. As to quaternary structure, F-type ATPases have 2 components, CF(1) - the catalytic core - and CF(0) - the membrane proton channel. CF(1) has five subunits: alpha(3), beta(3), gamma(1), delta(1), epsilon(1). CF(0) has three main subunits: a, b and c.

The protein localises to the plastid. The protein resides in the chloroplast thylakoid membrane. Functionally, produces ATP from ADP in the presence of a proton gradient across the membrane. The sequence is that of ATP synthase epsilon chain, chloroplastic from Guillardia theta (Cryptophyte).